Consider the following 201-residue polypeptide: tRNA (guanine-N(7)-)-methyltransferase (201 aa).

Residues Glu-33, Glu-58, Asp-85, and Asp-108 each contribute to the S-adenosyl-L-methionine site. Residue Asp-108 is part of the active site. Substrate-binding residues include Lys-112 and Asp-144.

This sequence belongs to the class I-like SAM-binding methyltransferase superfamily. TrmB family.

It catalyses the reaction guanosine(46) in tRNA + S-adenosyl-L-methionine = N(7)-methylguanosine(46) in tRNA + S-adenosyl-L-homocysteine. Its pathway is tRNA modification; N(7)-methylguanine-tRNA biosynthesis. In terms of biological role, catalyzes the formation of N(7)-methylguanine at position 46 (m7G46) in tRNA. The polypeptide is tRNA (guanine-N(7)-)-methyltransferase (Anaeromyxobacter dehalogenans (strain 2CP-C)).